Reading from the N-terminus, the 99-residue chain is Large ribosomal subunit protein uL23 (99 aa).

Belongs to the universal ribosomal protein uL23 family. As to quaternary structure, part of the 50S ribosomal subunit. Contacts protein L29, and trigger factor when it is bound to the ribosome.

One of the early assembly proteins it binds 23S rRNA. One of the proteins that surrounds the polypeptide exit tunnel on the outside of the ribosome. Forms the main docking site for trigger factor binding to the ribosome. The polypeptide is Large ribosomal subunit protein uL23 (Azotobacter vinelandii (strain DJ / ATCC BAA-1303)).